Here is an 856-residue protein sequence, read N- to C-terminus: MATYMSTICFGSFECKLPYSPASCGHIVKEREVPASVDPFADLETQLSARLRKQEYATVRVLKNGTFTYRYKTDAQIMRIQKKLERKDREEYHFQMAAPSIVSKITIAGGDPPSKSEPQAPRGIIHTTPKVRKVKTRPIIKLTEGQMNHLIKQVKQIMSEKRGSVHLISKKTTHVQYKEILGATRAAVRTAHMMGLRRRVDFRCDTWTVGLLQRLARTDKWSNQVRTIHVRRGDSGVILNTKSLKGHFGRSSGDLFIVRGSHEGKLYDARSRVTQSVLNSMIQFSNADNFWKGLDGNWARMRYPSDHTCVAGLPVADCGRVAALTRHSILPCYKITCPTCAQQYASLPVSDLFKLLHKHARDGLNRLGADKDRFIHVNKFLMALEHLTEPVDLNLELFNEIFKSIGEKQQAPFKNLNVLNNFFLKGKENTAHEWQVAQLSLLELARFQKNRTDNIKKGDISFFRNKLSARANWNLYLSCDNQLDKNANFLWGQREYHAKRFFSNFFDEIDPAKGYSAYEIRKHPNGTRKLSIGNLVVPLDLAEFRQKMKGDYRKQPGVSRKCTSSKDGNYVYPCCCTTLDDGSAIESTFYPPTKKHLVIGNSGDQKFVDLPKGDSEMLYIAKQGYCYINVFLAMLINISEEDAKDFTKKVRDMCVPKLGTWPTMMDLATTCAQMRIFYPDVHDAELPRILVDHDTQTCHVVDSFGSQTTGYHILKASSVSQLILFANDELESDIKHYRVGGVPNACPELGSTISPFREGGVIMSESAALKLLLKGIFRPRVMRQLLLDEPYLLILSILSPGILMAMYNNGIFELAVRLWINEKQSIAMIASLLSALALRVSAAETLVAQRIIIDAA.

Positions 141–284 (KLTEGQMNHL…QSVLNSMIQF (144 aa)) constitute a Peptidase S30 domain. Residues H192, D201, and S235 each act as for P1 proteinase activity in the active site. The Involved in interaction with stylet and aphid transmission motif lies at 334 to 337 (KITC). The Involved in virions binding and aphid transmission signature appears at 592 to 594 (PTK). One can recognise a Peptidase C6 domain in the interval 618–740 (LYIAKQGYCY…ESDIKHYRVG (123 aa)). Active-site for helper component proteinase activity residues include C626 and H699.

This sequence belongs to the potyviridae genome polyprotein family. In terms of processing, genome polyprotein of potyviruses undergoes post-translational proteolytic processing by the main proteinase NIa-pro resulting in the production of at least ten individual proteins. The P1 proteinase and the HC-pro cleave only their respective C-termini autocatalytically. 6K1 is essential for proper proteolytic separation of P3 from CI.

It catalyses the reaction Hydrolyzes a Gly-|-Gly bond at its own C-terminus, commonly in the sequence -Tyr-Xaa-Val-Gly-|-Gly, in the processing of the potyviral polyprotein.. Its function is as follows. Required for aphid transmission and also has proteolytic activity. Only cleaves a Gly-Gly dipeptide at its own C-terminus. Interacts with virions and aphid stylets. Acts as a suppressor of RNA-mediated gene silencing, also known as post-transcriptional gene silencing (PTGS), a mechanism of plant viral defense that limits the accumulation of viral RNAs. May have RNA-binding activity. In Potato virus Y (strain O) (PVY), this protein is Genome polyprotein.